Consider the following 39-residue polypeptide: Photosystem II reaction center protein J (39 aa).

A helical membrane pass occupies residues 9–29 (LWLVGLVGGLAVITMLGLFIY).

This sequence belongs to the PsbJ family. As to quaternary structure, PSII is composed of 1 copy each of membrane proteins PsbA, PsbB, PsbC, PsbD, PsbE, PsbF, PsbH, PsbI, PsbJ, PsbK, PsbL, PsbM, PsbT, PsbX, PsbY, PsbZ, Psb30/Ycf12, at least 3 peripheral proteins of the oxygen-evolving complex and a large number of cofactors. It forms dimeric complexes.

The protein localises to the plastid. Its subcellular location is the chloroplast thylakoid membrane. In terms of biological role, one of the components of the core complex of photosystem II (PSII). PSII is a light-driven water:plastoquinone oxidoreductase that uses light energy to abstract electrons from H(2)O, generating O(2) and a proton gradient subsequently used for ATP formation. It consists of a core antenna complex that captures photons, and an electron transfer chain that converts photonic excitation into a charge separation. In Phaeodactylum tricornutum (strain CCAP 1055/1), this protein is Photosystem II reaction center protein J.